The sequence spans 96 residues: Putative pterin-4-alpha-carbinolamine dehydratase (96 aa).

The protein belongs to the pterin-4-alpha-carbinolamine dehydratase family.

It catalyses the reaction (4aS,6R)-4a-hydroxy-L-erythro-5,6,7,8-tetrahydrobiopterin = (6R)-L-erythro-6,7-dihydrobiopterin + H2O. This is Putative pterin-4-alpha-carbinolamine dehydratase from Caulobacter sp. (strain K31).